The following is a 231-amino-acid chain: uncharacterized protein (231 aa).

Residue 10-34 (VVTGAGSGIGEAIATLLHEEGAKVV) coordinates NADP(+). Position 140 (Ser-140) interacts with substrate. Tyr-153 functions as the Proton acceptor in the catalytic mechanism.

Belongs to the short-chain dehydrogenases/reductases (SDR) family.

This is an uncharacterized protein from Staphylococcus aureus (strain COL).